The following is a 207-amino-acid chain: Outer-membrane lipoprotein LolB (207 aa).

Positions 1–21 (MTLPDFRLIRLLPLASLVLTA) are cleaved as a signal peptide. C22 is lipidated: N-palmitoyl cysteine. C22 carries S-diacylglycerol cysteine lipidation.

The protein belongs to the LolB family. In terms of assembly, monomer.

The protein localises to the cell outer membrane. Its function is as follows. Plays a critical role in the incorporation of lipoproteins in the outer membrane after they are released by the LolA protein. This is Outer-membrane lipoprotein LolB from Salmonella arizonae (strain ATCC BAA-731 / CDC346-86 / RSK2980).